Reading from the N-terminus, the 220-residue chain is Probable metallo-hydrolase YybB (220 aa).

Zn(2+) is bound by residues His67, His69, Asp71, His72, His139, Asp158, and His200.

It belongs to the metallo-beta-lactamase superfamily. Requires Zn(2+) as cofactor.

This chain is Probable metallo-hydrolase YybB (yybB), found in Bacillus subtilis (strain 168).